Consider the following 191-residue polypeptide: Elongation factor P (191 aa).

N6-(3,6-diaminohexanoyl)-5-hydroxylysine is present on Lys-34.

It belongs to the elongation factor P family. May be beta-lysylated on the epsilon-amino group of Lys-34 by the combined action of EpmA and EpmB, and then hydroxylated on the C5 position of the same residue by EpmC (if this protein is present). Lysylation is critical for the stimulatory effect of EF-P on peptide-bond formation. The lysylation moiety may extend toward the peptidyltransferase center and stabilize the terminal 3-CCA end of the tRNA. Hydroxylation of the C5 position on Lys-34 may allow additional potential stabilizing hydrogen-bond interactions with the P-tRNA.

Its subcellular location is the cytoplasm. It functions in the pathway protein biosynthesis; polypeptide chain elongation. Involved in peptide bond synthesis. Alleviates ribosome stalling that occurs when 3 or more consecutive Pro residues or the sequence PPG is present in a protein, possibly by augmenting the peptidyl transferase activity of the ribosome. Modification of Lys-34 is required for alleviation. This Psychrobacter sp. (strain PRwf-1) protein is Elongation factor P.